The sequence spans 386 residues: Mannitol-1-phosphate 5-dehydrogenase (386 aa).

4–15 (AVHFGAGNIGRG) provides a ligand contact to NAD(+).

This sequence belongs to the mannitol dehydrogenase family.

It catalyses the reaction D-mannitol 1-phosphate + NAD(+) = beta-D-fructose 6-phosphate + NADH + H(+). This Oceanobacillus iheyensis (strain DSM 14371 / CIP 107618 / JCM 11309 / KCTC 3954 / HTE831) protein is Mannitol-1-phosphate 5-dehydrogenase.